We begin with the raw amino-acid sequence, 247 residues long: Carboxy-S-adenosyl-L-methionine synthase (247 aa).

Residues Tyr-38, 63 to 65, Asn-131, and Arg-198 contribute to the S-adenosyl-L-methionine site; that span reads GCS.

The protein belongs to the class I-like SAM-binding methyltransferase superfamily. Cx-SAM synthase family. As to quaternary structure, homodimer.

It catalyses the reaction prephenate + S-adenosyl-L-methionine = carboxy-S-adenosyl-L-methionine + 3-phenylpyruvate + H2O. Its function is as follows. Catalyzes the conversion of S-adenosyl-L-methionine (SAM) to carboxy-S-adenosyl-L-methionine (Cx-SAM). The polypeptide is Carboxy-S-adenosyl-L-methionine synthase (Desulforapulum autotrophicum (strain ATCC 43914 / DSM 3382 / VKM B-1955 / HRM2) (Desulfobacterium autotrophicum)).